The following is an 86-amino-acid chain: BolA-like protein 2 (86 aa).

Residue M1 is modified to N-acetylmethionine.

The protein belongs to the BolA/IbaG family. As to quaternary structure, interacts with GLRX3; forms a heterotrimeric complex composed by two BOLA2 molecules and one GLRX3 molecule; linked by [2Fe-2S] clusters.

It localises to the cytoplasm. It is found in the nucleus. Its function is as follows. Acts as a cytosolic iron-sulfur (Fe-S) cluster assembly factor that facilitates [2Fe-2S] cluster insertion into a subset of cytosolic proteins. Acts together with the monothiol glutaredoxin GLRX3. The polypeptide is BolA-like protein 2 (BOLA2) (Homo sapiens (Human)).